The chain runs to 215 residues: Cytochrome b6 (215 aa).

Residues 32–52 (IFHCLGGITLTCFLVQVATGF) form a helical membrane-spanning segment. C35 provides a ligand contact to heme c. The heme b site is built by H86 and H100. 3 consecutive transmembrane segments (helical) span residues 90-110 (ASMM…TGGF), 116-136 (LTWV…VTGY), and 186-206 (LHTF…FPMI). Heme b-binding residues include H187 and H202.

Belongs to the cytochrome b family. PetB subfamily. The 4 large subunits of the cytochrome b6-f complex are cytochrome b6, subunit IV (17 kDa polypeptide, PetD), cytochrome f and the Rieske protein, while the 4 small subunits are PetG, PetL, PetM and PetN. The complex functions as a dimer. Heme b serves as cofactor. Requires heme c as cofactor.

The protein resides in the plastid. It localises to the chloroplast thylakoid membrane. In terms of biological role, component of the cytochrome b6-f complex, which mediates electron transfer between photosystem II (PSII) and photosystem I (PSI), cyclic electron flow around PSI, and state transitions. The protein is Cytochrome b6 of Calycanthus floridus var. glaucus (Eastern sweetshrub).